Reading from the N-terminus, the 336-residue chain is tRNA N6-adenosine threonylcarbamoyltransferase (336 aa).

Residues His-114 and His-118 each contribute to the Fe cation site. Substrate is bound by residues 136–140 (LVSGG), Asp-169, Gly-182, Asp-186, and Asn-275. Asp-302 provides a ligand contact to Fe cation.

The protein belongs to the KAE1 / TsaD family. Requires Fe(2+) as cofactor.

The protein resides in the cytoplasm. It carries out the reaction L-threonylcarbamoyladenylate + adenosine(37) in tRNA = N(6)-L-threonylcarbamoyladenosine(37) in tRNA + AMP + H(+). Required for the formation of a threonylcarbamoyl group on adenosine at position 37 (t(6)A37) in tRNAs that read codons beginning with adenine. Is involved in the transfer of the threonylcarbamoyl moiety of threonylcarbamoyl-AMP (TC-AMP) to the N6 group of A37, together with TsaE and TsaB. TsaD likely plays a direct catalytic role in this reaction. The chain is tRNA N6-adenosine threonylcarbamoyltransferase from Streptococcus agalactiae serotype Ia (strain ATCC 27591 / A909 / CDC SS700).